Reading from the N-terminus, the 92-residue chain is Small ribosomal subunit protein uS19 (92 aa).

The protein belongs to the universal ribosomal protein uS19 family.

Functionally, protein S19 forms a complex with S13 that binds strongly to the 16S ribosomal RNA. The sequence is that of Small ribosomal subunit protein uS19 from Nostoc punctiforme (strain ATCC 29133 / PCC 73102).